The following is a 394-amino-acid chain: MQNSPLTADCSLNAGRPLTIGLVAGETSGDILGAGLIRALKVQVPNARFVGVAGPLMQAEGCEAWYEMEELAVMGVVEVLERLPRLLKIRKDLTQRFSELSPDVFVGIDAPDFNITLEGRLKQRGIRTIHYVSPSVWAWRQKRVFKIGKATDMVLAFLPFEKAFYDRFNVPCRFIGHTMADAMPLVPDQQAARAELGIAPNATCLALLPGSRHSEVEMLSADFLRTAVILRDKLPNLEVVVPLVNSKRREQFERIKAEIAPDLSVHLLDGKARVAMIASDAALLASGTAALECMLAKCPMVVGYRMKPFTFWLAERLVKTPYVSLPNLLAGEELVTELLQQECQPQKLAGALLPLLQGGSEIAALKERFLVLHQSIRCGADEQAAQAVLELADR.

The protein belongs to the LpxB family.

It catalyses the reaction 2-N,3-O-bis[(3R)-3-hydroxytetradecanoyl]-alpha-D-glucosaminyl 1-phosphate + UDP-2-N,3-O-bis[(3R)-3-hydroxytetradecanoyl]-alpha-D-glucosamine = lipid A disaccharide (E. coli) + UDP + H(+). The enzyme catalyses a lipid X + a UDP-2-N,3-O-bis[(3R)-3-hydroxyacyl]-alpha-D-glucosamine = a lipid A disaccharide + UDP + H(+). Its pathway is glycolipid biosynthesis; lipid IV(A) biosynthesis; lipid IV(A) from (3R)-3-hydroxytetradecanoyl-[acyl-carrier-protein] and UDP-N-acetyl-alpha-D-glucosamine: step 5/6. Its function is as follows. Condensation of UDP-2,3-diacylglucosamine and 2,3-diacylglucosamine-1-phosphate to form lipid A disaccharide, a precursor of lipid A, a phosphorylated glycolipid that anchors the lipopolysaccharide to the outer membrane of the cell. The polypeptide is Lipid-A-disaccharide synthase (Yersinia pestis).